The chain runs to 279 residues: Aquaporin A (279 aa).

Residues 1-40 (MVKVVPLRFITYDPLKDPSKMIYRRPISKPVKAFKGFFSE) are Cytoplasmic-facing. The chain crosses the membrane as a helical span at residues 41-61 (FLGTLYLVYFCGGSVCAAFAV). At 62-69 (AGDSAARA) the chain is on the extracellular side. The chain crosses the membrane as a helical span at residues 70 to 90 (LLGGLIQGMALAALIWAVSGV). The Cytoplasmic portion of the chain corresponds to 91–114 (SGCNLNPAVTLANLLSGRVGLIDS). The NPA 1 signature appears at 96–98 (NPA). The chain crosses the membrane as a helical span at residues 115–135 (LYYVAAQILGCIAGAGILYGC). Residues 136–158 (LPNMYRIDLGVPHLAPGMNTGQA) lie on the Extracellular side of the membrane. A helical membrane pass occupies residues 159–179 (FLMEMMLTSILCLCVLGTSVF). The Cytoplasmic segment spans residues 180 to 188 (NVWDRRLNR). A helical transmembrane segment spans residues 189-209 (IAPFAIGLALFIGVAIGFNFS). Topologically, residues 210–227 (GGALNPVRVLGPSIISGV) are extracellular. The NPA 2 motif lies at 214-216 (NPV). Residues 228 to 248 (WSHHWVYWLGPIVGAILAAFI) traverse the membrane as a helical segment. At 249 to 279 (YRCLLQERFDVIERPGYIAPLIDPSTAVSSY) the chain is on the cytoplasmic side.

Belongs to the MIP/aquaporin (TC 1.A.8) family.

The protein localises to the cell membrane. In terms of biological role, may form a water-specific channel. Required for prolonged spore survival on fruiting bodies. This chain is Aquaporin A (aqpA), found in Dictyostelium discoideum (Social amoeba).